Consider the following 773-residue polypeptide: Mitochondrial 15S rRNA processing factor CCM1 (773 aa).

A mitochondrion-targeting transit peptide spans 1–23 (MLRARLLVPLVRPALVHRLDRCY). Residues 89–106 (AAEATEQHKELPPAEQER) show a composition bias toward basic and acidic residues. Positions 89–122 (AAEATEQHKELPPAEQERPSGANTHTAPIKHDTK) are disordered. 5 PPR repeats span residues 220–254 (SAIT…NITP), 255–285 (TVHT…LKLA), 294–328 (NQVI…SLET), 331–365 (TAHT…SVAN), and 366–400 (VRTY…HSES).

The protein belongs to the CCM1 family. As to quaternary structure, binds to mitochondrial small subunit 15S rRNA.

Its subcellular location is the mitochondrion. In terms of biological role, regulates mitochondrial small subunit maturation by controlling 15S rRNA 5'-end processing. Localizes to the 5' precursor of the 15S rRNA in a position that is subsequently occupied by mS47 in the mature yeast mtSSU. Uses structure and sequence-specific RNA recognition, binding to a single-stranded region of the precursor and specifically recognizing bases -6 to -1. The exchange of Ccm1 for mS47 is coupled to the irreversible removal of precursor rRNA that is accompanied by conformational changes of the mitoribosomal proteins uS5m and mS26. These conformational changes signal completion of 5'-end rRNA processing through protection of the mature 5'-end of the 15S rRNA and stabilization of mS47. The removal of the 5' precursor together with the dissociation of Ccm1 may be catalyzed by the 5'-3' exoribonuclease Pet127. Involved in the specific removal of group I introns in mitochondrial encoded transcripts. This is Mitochondrial 15S rRNA processing factor CCM1 (CCM1) from Yarrowia lipolytica (strain CLIB 122 / E 150) (Yeast).